Here is a 434-residue protein sequence, read N- to C-terminus: ATP-dependent protease ATPase subunit HslU (434 aa).

Residues isoleucine 18, 60–65 (GVGKTE), aspartate 247, glutamate 312, and arginine 384 each bind ATP.

It belongs to the ClpX chaperone family. HslU subfamily. In terms of assembly, a double ring-shaped homohexamer of HslV is capped on each side by a ring-shaped HslU homohexamer. The assembly of the HslU/HslV complex is dependent on binding of ATP.

It is found in the cytoplasm. Its function is as follows. ATPase subunit of a proteasome-like degradation complex; this subunit has chaperone activity. The binding of ATP and its subsequent hydrolysis by HslU are essential for unfolding of protein substrates subsequently hydrolyzed by HslV. HslU recognizes the N-terminal part of its protein substrates and unfolds these before they are guided to HslV for hydrolysis. This Brucella ovis (strain ATCC 25840 / 63/290 / NCTC 10512) protein is ATP-dependent protease ATPase subunit HslU.